Reading from the N-terminus, the 361-residue chain is Queuine tRNA-ribosyltransferase (361 aa).

The Proton acceptor role is filled by Asp-92. Residues 92 to 96 (DSGGF), Asp-146, Gln-189, and Gly-216 each bind substrate. Positions 247–253 (GVGKPAD) are RNA binding. The active-site Nucleophile is Asp-266. The interval 271-275 (TRSGR) is RNA binding; important for wobble base 34 recognition. 4 residues coordinate Zn(2+): Cys-304, Cys-306, Cys-309, and His-335.

It belongs to the queuine tRNA-ribosyltransferase family. As to quaternary structure, homodimer. Within each dimer, one monomer is responsible for RNA recognition and catalysis, while the other monomer binds to the replacement base PreQ1. Zn(2+) serves as cofactor.

It carries out the reaction 7-aminomethyl-7-carbaguanine + guanosine(34) in tRNA = 7-aminomethyl-7-carbaguanosine(34) in tRNA + guanine. It functions in the pathway tRNA modification; tRNA-queuosine biosynthesis. In terms of biological role, catalyzes the base-exchange of a guanine (G) residue with the queuine precursor 7-aminomethyl-7-deazaguanine (PreQ1) at position 34 (anticodon wobble position) in tRNAs with GU(N) anticodons (tRNA-Asp, -Asn, -His and -Tyr). Catalysis occurs through a double-displacement mechanism. The nucleophile active site attacks the C1' of nucleotide 34 to detach the guanine base from the RNA, forming a covalent enzyme-RNA intermediate. The proton acceptor active site deprotonates the incoming PreQ1, allowing a nucleophilic attack on the C1' of the ribose to form the product. After dissociation, two additional enzymatic reactions on the tRNA convert PreQ1 to queuine (Q), resulting in the hypermodified nucleoside queuosine (7-(((4,5-cis-dihydroxy-2-cyclopenten-1-yl)amino)methyl)-7-deazaguanosine). The polypeptide is Queuine tRNA-ribosyltransferase (Rickettsia rickettsii (strain Iowa)).